Consider the following 72-residue polypeptide: UPF0346 protein EF_1680 (72 aa).

This sequence belongs to the UPF0346 family.

In Enterococcus faecalis (strain ATCC 700802 / V583), this protein is UPF0346 protein EF_1680.